The sequence spans 345 residues: Phosphate import ATP-binding protein PstB 2 (345 aa).

The disordered stretch occupies residues 1–57 (MSDTPQSEPRRSDDRSGADDATAAAAGSTDAAAAAVSSKTGGIAGPPGGPGEVDGDE). Basic and acidic residues predominate over residues 8-18 (EPRRSDDRSGA). Residues 19 to 35 (DDATAAAAGSTDAAAAA) are compositionally biased toward low complexity. The segment covering 42-52 (GIAGPPGGPGE) has biased composition (gly residues). One can recognise an ABC transporter domain in the interval 86-340 (VSVSDLDTYY…PQSQRVEDYV (255 aa)). 118–125 (GPSGCGKS) serves as a coordination point for ATP.

The protein belongs to the ABC transporter superfamily. Phosphate importer (TC 3.A.1.7) family. In terms of assembly, the complex is composed of two ATP-binding proteins (PstB), two transmembrane proteins (PstC and PstA) and a solute-binding protein (PstS).

It is found in the cell membrane. The catalysed reaction is phosphate(out) + ATP + H2O = ADP + 2 phosphate(in) + H(+). Part of the ABC transporter complex PstSACB involved in phosphate import. Responsible for energy coupling to the transport system. The polypeptide is Phosphate import ATP-binding protein PstB 2 (Halobacterium salinarum (strain ATCC 700922 / JCM 11081 / NRC-1) (Halobacterium halobium)).